The chain runs to 1054 residues: Putative disease resistance RPP13-like protein 1 (1054 aa).

Leucine-zipper stretches follow at residues 9 to 20 (LAAFLQALFQTL) and 39 to 53 (LERL…TAVL). Residues 117 to 147 (DFLDGNSEHLETRLEKVTIRLERLASQRNIL) are a coiled coil. Positions 152–462 (LTAMIPKQRL…AEGFLQQTRS (311 aa)) constitute an NB-ARC domain. 203-210 (GIGGVGKT) serves as a coordination point for ATP. 5 LRR repeats span residues 579 to 600 (RLRV…FFKN), 603 to 624 (HARF…LCYM), 626 to 648 (NLQT…ISNL), 650 to 672 (NLRY…GRLK), and 676 to 697 (TLTT…GGLH). Residues 1018 to 1054 (PQYHHPQFHLPRSNVSGSPKSHGSHRSYDSRSSSRYD) form a disordered region. The span at 1043-1054 (RSYDSRSSSRYD) shows a compositional bias: basic and acidic residues.

The protein belongs to the disease resistance NB-LRR family. RPP13 subfamily.

In terms of biological role, potential disease resistance protein. The sequence is that of Putative disease resistance RPP13-like protein 1 (RPPL1) from Arabidopsis thaliana (Mouse-ear cress).